The primary structure comprises 920 residues: Probable transport protein MmpL7 (920 aa).

The next 12 helical transmembrane spans lie at 44–64 (LLVV…LTFT), 210–230 (ITAW…VLLL), 241–261 (AIVL…AAVV), 271–291 (VFSW…ATML), 311–331 (LPAF…LLLA), 344–364 (LGVF…IALA), 389–409 (SASA…IIGM), 761–781 (LIHD…LASM), 790–810 (AVGV…IALW), 822–842 (VPLV…VAGI), 864–884 (GAVA…VLVS), and 888–908 (FSVL…LITV).

The protein belongs to the resistance-nodulation-cell division (RND) (TC 2.A.6) family. MmpL subfamily.

The protein resides in the cell membrane. The protein is Probable transport protein MmpL7 (mmpL7) of Mycobacterium bovis (strain ATCC BAA-935 / AF2122/97).